A 231-amino-acid polypeptide reads, in one-letter code: Small ribosomal subunit protein uS3 (231 aa).

Residues 39–108 (IKNYIKKRYK…EISISVLEVK (70 aa)) enclose the KH type-2 domain.

It belongs to the universal ribosomal protein uS3 family. As to quaternary structure, part of the 30S ribosomal subunit. Forms a tight complex with proteins S10 and S14.

In terms of biological role, binds the lower part of the 30S subunit head. Binds mRNA in the 70S ribosome, positioning it for translation. This chain is Small ribosomal subunit protein uS3, found in Aquifex pyrophilus.